The sequence spans 349 residues: Phosphate acyltransferase (349 aa).

Belongs to the PlsX family. Homodimer. Probably interacts with PlsY.

The protein localises to the cytoplasm. The catalysed reaction is a fatty acyl-[ACP] + phosphate = an acyl phosphate + holo-[ACP]. Its pathway is lipid metabolism; phospholipid metabolism. Catalyzes the reversible formation of acyl-phosphate (acyl-PO(4)) from acyl-[acyl-carrier-protein] (acyl-ACP). This enzyme utilizes acyl-ACP as fatty acyl donor, but not acyl-CoA. The protein is Phosphate acyltransferase of Rhodospirillum rubrum (strain ATCC 11170 / ATH 1.1.1 / DSM 467 / LMG 4362 / NCIMB 8255 / S1).